Reading from the N-terminus, the 558-residue chain is Formate--tetrahydrofolate ligase (558 aa).

65–72 (TPAGEGKT) is an ATP binding site.

This sequence belongs to the formate--tetrahydrofolate ligase family.

The catalysed reaction is (6S)-5,6,7,8-tetrahydrofolate + formate + ATP = (6R)-10-formyltetrahydrofolate + ADP + phosphate. It functions in the pathway one-carbon metabolism; tetrahydrofolate interconversion. This Methylobacterium sp. (strain 4-46) protein is Formate--tetrahydrofolate ligase.